The chain runs to 280 residues: 3-phenylpropionate-dihydrodiol/cinnamic acid-dihydrodiol dehydrogenase (280 aa).

Residue S143 coordinates substrate. Residue Y156 is the Proton acceptor of the active site.

This sequence belongs to the short-chain dehydrogenases/reductases (SDR) family.

The catalysed reaction is 3-(cis-5,6-dihydroxycyclohexa-1,3-dien-1-yl)propanoate + NAD(+) = 3-(2,3-dihydroxyphenyl)propanoate + NADH + H(+). It carries out the reaction (2E)-3-(cis-5,6-dihydroxycyclohexa-1,3-dien-1-yl)prop-2-enoate + NAD(+) = (2E)-3-(2,3-dihydroxyphenyl)prop-2-enoate + NADH + H(+). It functions in the pathway aromatic compound metabolism; 3-phenylpropanoate degradation. Its function is as follows. Converts 3-phenylpropionate-dihydrodiol (PP-dihydrodiol) and cinnamic acid-dihydrodiol (CI-dihydrodiol) into 3-(2,3-dihydroxylphenyl)propanoic acid (DHPP) and 2,3-dihydroxicinnamic acid (DHCI), respectively. In Photorhabdus laumondii subsp. laumondii (strain DSM 15139 / CIP 105565 / TT01) (Photorhabdus luminescens subsp. laumondii), this protein is 3-phenylpropionate-dihydrodiol/cinnamic acid-dihydrodiol dehydrogenase.